The chain runs to 511 residues: BAR/IMD domain-containing adapter protein 2-like 1 (511 aa).

The IMD domain maps to 1 to 249; sequence MSRGPEEVNR…MNMIEEIKTP (249 aa). Positions 115–154 form a coiled coil; that stretch reads MNATLKRYQTEHKNKLESLEKSQAELKKIRRKSQGSRNAL. 2 positions are modified to phosphothreonine: Thr-248 and Thr-257. Phosphoserine is present on residues Ser-261 and Ser-281. Residues 302-328 are disordered; it reads NNPATAAPNSQRVNNSTGTSEDPSLQR. Positions 303–328 are enriched in polar residues; it reads NPATAAPNSQRVNNSTGTSEDPSLQR. Residues Ser-331 and Ser-354 each carry the phosphoserine modification. The SH3 domain maps to 339 to 402; sequence MKKQKVKTIF…PSSYTKLLEE (64 aa). Thr-412 bears the Phosphothreonine mark. 3 positions are modified to phosphoserine: Ser-414, Ser-420, and Ser-422. Residues 451–511 are disordered; the sequence is RRADSARTTS…TNDRSAPIIR (61 aa). The interval 483 to 511 is binds F-actin; it reads PPFLSGENPFATVKLRPTVTNDRSAPIIR.

Interacts with RAC1. Binds to F-actin. Interacts with FASLG. Interacts (via SH3 domain) with E.coli effector protein EspF(U) (via PXXP motifs). Identified in a complex containing at least WASL, BAIAP2L1 and E.coli EspF(U). Interacts with E.coli intimin receptor Tir. Post-translationally, phosphorylated on tyrosine in response to insulin.

The protein localises to the cytoplasm. It localises to the cytoskeleton. Its function is as follows. May function as adapter protein. Involved in the formation of clusters of actin bundles. Plays a role in the reorganization of the actin cytoskeleton in response to bacterial infection. The polypeptide is BAR/IMD domain-containing adapter protein 2-like 1 (BAIAP2L1) (Homo sapiens (Human)).